A 287-amino-acid chain; its full sequence is ATP synthase gamma chain (287 aa).

It belongs to the ATPase gamma chain family. F-type ATPases have 2 components, CF(1) - the catalytic core - and CF(0) - the membrane proton channel. CF(1) has five subunits: alpha(3), beta(3), gamma(1), delta(1), epsilon(1). CF(0) has three main subunits: a, b and c.

Its subcellular location is the cell inner membrane. Functionally, produces ATP from ADP in the presence of a proton gradient across the membrane. The gamma chain is believed to be important in regulating ATPase activity and the flow of protons through the CF(0) complex. The sequence is that of ATP synthase gamma chain from Azotobacter vinelandii (strain DJ / ATCC BAA-1303).